Here is a 323-residue protein sequence, read N- to C-terminus: Galectin-4 (323 aa).

2 consecutive Galectin domains span residues 19–150 and 194–323; these read YYKP…INFI and YKTR…YVQI. Residue 256–262 participates in a beta-D-galactoside binding; sequence WGAEERK.

Monomer.

Its function is as follows. Galectin that binds lactose and a related range of sugars. May be involved in the assembly of adherens junctions. This is Galectin-4 (LGALS4) from Sus scrofa (Pig).